Reading from the N-terminus, the 328-residue chain is Nicotianamine synthase 1 (328 aa).

This sequence belongs to the nicotianamine synthase (NAS)-like family. As to expression, in roots but not in leaves.

The catalysed reaction is 3 S-adenosyl-L-methionine = nicotianamine + 3 S-methyl-5'-thioadenosine + 3 H(+). Synthesizes nicotianamine, a polyamine that is the first intermediate in the synthesis of the phytosiderophores of the mugineic acid type found in gramineae which serves as a sensor for the physiological iron status within the plant, and/or might be involved in the transport of iron. The protein is Nicotianamine synthase 1 (NAS1) of Hordeum vulgare (Barley).